A 209-amino-acid polypeptide reads, in one-letter code: Thymidine kinase (209 aa).

ATP is bound by residues 16 to 23 (GPMFAGKT) and 90 to 93 (DEAQ). Residue glutamate 91 is the Proton acceptor of the active site.

Belongs to the thymidine kinase family. Homotetramer.

The protein localises to the cytoplasm. The catalysed reaction is thymidine + ATP = dTMP + ADP + H(+). The protein is Thymidine kinase of Onion yellows phytoplasma (strain OY-M).